The chain runs to 905 residues: Gamma-tubulin complex component 2 (905 aa).

The residue at position 83 (Y83) is a Phosphotyrosine. Residues 877–905 (AERSQKAAPQVPVPRGPSAPAPRVAIPAQ) are disordered. Residues 887–896 (VPVPRGPSAP) are compositionally biased toward pro residues.

Belongs to the TUBGCP family. As to quaternary structure, component of the gamma-tubulin ring complex (gTuRC) consisting of TUBGCP2, TUBGCP3, TUBGCP4, TUBGCP5 and TUBGCP6 and gamma-tubulin TUBG1 or TUBG2. TUBGCP2, TUBGCP3, TUBGCP4, TUBGCP5 and TUBGCP6 assemble in a 5:5:2:1:1 stoichiometry; each is associated with a gamma-tubulin, thereby arranging 14 gamma-tubulins in a helical manner. Gamma-tubulin at the first position is blocked by TUBGCP3 at the last position, allowing 13 protafilaments to grow into a microtubule. The gTuRC (via TUBGCP3 and TUBGCP6) interacts with ACTB and MZT1; the interactions form a luminal bridge that stabilizes the initial structure during complex assembly. The gTuRC (via TUBGCP2) interacts with MZT2A/MZT2B and CDK5RAP2 (via CM1 motif); the interactions play a role in gTuRC activation. Interacts with ATF5; the ATF5:PCNT:polyglutamylated tubulin (PGT) tripartite unites the mother centriole and the pericentriolar material (PCM) in the centrosome.

It is found in the cytoplasm. The protein localises to the cytoskeleton. It localises to the microtubule organizing center. Its subcellular location is the centrosome. Functionally, component of the gamma-tubulin ring complex (gTuRC) which mediates microtubule nucleation. The gTuRC regulates the minus-end nucleation of alpha-beta tubulin heterodimers that grow into microtubule protafilaments, a critical step in centrosome duplication and spindle formation. Plays a role in neuronal migration. In Mus musculus (Mouse), this protein is Gamma-tubulin complex component 2 (Tubgcp2).